A 44-amino-acid chain; its full sequence is Cytochrome b559 subunit beta (44 aa).

A helical transmembrane segment spans residues 19-35; sequence WLSVHALAVPTVFFIGA. His-23 provides a ligand contact to heme.

It belongs to the PsbE/PsbF family. Heterodimer of an alpha subunit and a beta subunit. PSII is composed of 1 copy each of membrane proteins PsbA, PsbB, PsbC, PsbD, PsbE, PsbF, PsbH, PsbI, PsbJ, PsbK, PsbL, PsbM, PsbT, PsbX, PsbY, PsbZ, Psb30/Ycf12, peripheral proteins PsbO, CyanoQ (PsbQ), PsbU, PsbV and a large number of cofactors. It forms dimeric complexes. It depends on heme b as a cofactor.

It localises to the cellular thylakoid membrane. In terms of biological role, this b-type cytochrome is tightly associated with the reaction center of photosystem II (PSII). PSII is a light-driven water:plastoquinone oxidoreductase that uses light energy to abstract electrons from H(2)O, generating O(2) and a proton gradient subsequently used for ATP formation. It consists of a core antenna complex that captures photons, and an electron transfer chain that converts photonic excitation into a charge separation. The sequence is that of Cytochrome b559 subunit beta from Rippkaea orientalis (strain PCC 8801 / RF-1) (Cyanothece sp. (strain PCC 8801)).